Here is a 264-residue protein sequence, read N- to C-terminus: Thymidylate synthase (264 aa).

Residue Arg-21 participates in dUMP binding. His-51 is a (6R)-5,10-methylene-5,6,7,8-tetrahydrofolate binding site. DUMP is bound at residue 126–127; it reads RR. Catalysis depends on Cys-146, which acts as the Nucleophile. DUMP is bound by residues 166–169, Asn-177, and 207–209; these read RSCD and HLY. Asp-169 lines the (6R)-5,10-methylene-5,6,7,8-tetrahydrofolate pocket. Ala-263 is a binding site for (6R)-5,10-methylene-5,6,7,8-tetrahydrofolate.

This sequence belongs to the thymidylate synthase family. Bacterial-type ThyA subfamily. Homodimer.

It localises to the cytoplasm. The enzyme catalyses dUMP + (6R)-5,10-methylene-5,6,7,8-tetrahydrofolate = 7,8-dihydrofolate + dTMP. It functions in the pathway pyrimidine metabolism; dTTP biosynthesis. Functionally, catalyzes the reductive methylation of 2'-deoxyuridine-5'-monophosphate (dUMP) to 2'-deoxythymidine-5'-monophosphate (dTMP) while utilizing 5,10-methylenetetrahydrofolate (mTHF) as the methyl donor and reductant in the reaction, yielding dihydrofolate (DHF) as a by-product. This enzymatic reaction provides an intracellular de novo source of dTMP, an essential precursor for DNA biosynthesis. In Escherichia coli (strain 55989 / EAEC), this protein is Thymidylate synthase.